A 508-amino-acid chain; its full sequence is Photosystem II CP47 reaction center protein (508 aa).

The next 6 helical transmembrane spans lie at 21 to 36, 101 to 115, 140 to 156, 203 to 218, 237 to 252, and 457 to 472; these read SVHIMHTALVSGWAGS, IVFSGLCFLAAIWHW, GIHLFLAGVACFGFGAF, IAAGTLGILAGLFHLS, VLSSSIAAVFFAAFVV, and TFALLFFFGHIWHGAR.

It belongs to the PsbB/PsbC family. PsbB subfamily. As to quaternary structure, PSII is composed of 1 copy each of membrane proteins PsbA, PsbB, PsbC, PsbD, PsbE, PsbF, PsbH, PsbI, PsbJ, PsbK, PsbL, PsbM, PsbT, PsbX, PsbY, PsbZ, Psb30/Ycf12, at least 3 peripheral proteins of the oxygen-evolving complex and a large number of cofactors. It forms dimeric complexes. It depends on Binds multiple chlorophylls. PSII binds additional chlorophylls, carotenoids and specific lipids. as a cofactor.

The protein resides in the plastid. It localises to the chloroplast thylakoid membrane. One of the components of the core complex of photosystem II (PSII). It binds chlorophyll and helps catalyze the primary light-induced photochemical processes of PSII. PSII is a light-driven water:plastoquinone oxidoreductase, using light energy to abstract electrons from H(2)O, generating O(2) and a proton gradient subsequently used for ATP formation. In Oryza nivara (Indian wild rice), this protein is Photosystem II CP47 reaction center protein.